Consider the following 92-residue polypeptide: Protein S100-B (92 aa).

At S2 the chain carries Blocked amino end (Ser); alternate. At S2 the chain carries N-acetylserine; alternate. 2 EF-hand domains span residues 13-48 (DVFH…LEEI) and 49-84 (KEQE…VTTA). H16 serves as a coordination point for Zn(2+). The Ca(2+) site is built by S19, E22, and D24. Position 26 (H26) interacts with Zn(2+). Ca(2+) is bound by residues K27, E32, D62, D64, D66, E68, and E73. H86 and H91 together coordinate Zn(2+).

The protein belongs to the S-100 family. As to quaternary structure, dimer of either two alpha chains, or two beta chains, or one alpha and one beta chain. The S100B dimer binds two molecules of STK38. Interacts with CACYBP in a calcium-dependent manner. Interacts with ATAD3A; this interaction probably occurs in the cytosol prior to ATAD3A mitochondrial targeting. Interacts with S100A6. The S100B dimer interacts with two molecules of CAPZA1. Interacts with AGER. Interacts with PPP5C (via TPR repeats); the interaction is calcium-dependent and modulates PPP5C activity. Interacts with TPPP; this interaction inhibits TPPP dimerization. Interacts with isoform CLSTN3beta of CLSTN3; interaction promotes secretion. Although predominant among the water-soluble brain proteins, S100 is also found in a variety of other tissues.

It is found in the cytoplasm. The protein resides in the nucleus. It localises to the secreted. Small zinc- and- and calcium-binding protein that is highly expressed in astrocytes and constitutes one of the most abundant soluble proteins in brain. Weakly binds calcium but binds zinc very tightly-distinct binding sites with different affinities exist for both ions on each monomer. Physiological concentrations of potassium ion antagonize the binding of both divalent cations, especially affecting high-affinity calcium-binding sites. Acts as a neurotrophic factor that promotes astrocytosis and axonal proliferation. Involved in innervation of thermogenic adipose tissue by acting as an adipocyte-derived neurotrophic factor that promotes sympathetic innervation of adipose tissue. Binds to and initiates the activation of STK38 by releasing autoinhibitory intramolecular interactions within the kinase. Interaction with AGER after myocardial infarction may play a role in myocyte apoptosis by activating ERK1/2 and p53/TP53 signaling. Could assist ATAD3A cytoplasmic processing, preventing aggregation and favoring mitochondrial localization. May mediate calcium-dependent regulation on many physiological processes by interacting with other proteins, such as TPR-containing proteins, and modulating their activity. The polypeptide is Protein S100-B (Homo sapiens (Human)).